We begin with the raw amino-acid sequence, 247 residues long: Uridylate kinase (247 aa).

18 to 21 (KLSG) is an ATP binding site. G60 lines the UMP pocket. ATP-binding residues include G61 and R65. UMP-binding positions include D80 and 141–148 (TGNPFFTT). Residues T168, Y174, and D177 each contribute to the ATP site.

This sequence belongs to the UMP kinase family. In terms of assembly, homohexamer.

The protein localises to the cytoplasm. It catalyses the reaction UMP + ATP = UDP + ADP. It participates in pyrimidine metabolism; CTP biosynthesis via de novo pathway; UDP from UMP (UMPK route): step 1/1. Its activity is regulated as follows. Inhibited by UTP. In terms of biological role, catalyzes the reversible phosphorylation of UMP to UDP. This is Uridylate kinase from Stutzerimonas stutzeri (strain A1501) (Pseudomonas stutzeri).